Reading from the N-terminus, the 739-residue chain is MSSESKEQHNVSPRDSAEGNDSYPSGIHLELQRESSTDFKQFETNDQCRPYHRILIERQEKSDTNFKEFVIKKLQKNCQCSPAKAKNMILGFLPVLQWLPKYDLKKNILGDVMSGLIVGILLVPQSIAYSLLAGQEPVYGLYTSFFASIIYFLLGTSRHISVGIFGVLCLMIGETVDRELQKAGYDNAHSAPSLGMVSNGSTLLNHTSDRICDKSCYAIMVGSTVTFIAGVYQVAMGFFQVGFVSVYLSDALLSGFVTGASFTILTSQAKYLLGLNLPRTNGVGSLITTWIHVFRNIHKTNLCDLITSLLCLLVLLPTKELNEHFKSKLKAPIPIELVVVVAATLASHFGKLHENYNSSIAGHIPTGFMPPKVPEWNLIPSVAVDAIAISIIGFAITVSLSEMFAKKHGYTVKANQEMYAIGFCNIIPSFFHCFTTSAALAKTLVKESTGCHTQLSGVVTALVLLLVLLVIAPLFYSLQKSVLGVITIVNLRGALRKFRDLPKMWSISRMDTVIWFVTMLSSALLSTEIGLLVGVCFSIFCVILRTQKPKSSLLGLVEESEVFESVSAYKNLQIKPGIKIFRFVAPLYYINKECFKSALYKQTVNPILIKVAWKKAAKRKIKEKVVTLGGIQDEMSVQLSHDPLELHTIVIDCSAIQFLDTAGIHTLKEVRRDYEAIGIQVLLAQCNPTVRDSLTNGEYCKKEEENLLFYSVYEAMAFAEVSKNQKGVCVPNGLSLSSD.

The tract at residues 1–27 is disordered; it reads MSSESKEQHNVSPRDSAEGNDSYPSGI. A phosphoserine mark is found at Ser-12 and Ser-16. 2 consecutive transmembrane segments (helical) span residues 112-132 and 137-157; these read VMSGLIVGILLVPQSIAYSLL and PVYGLYTSFFASIIYFLLGTS. Asn-199 and Asn-205 each carry an N-linked (GlcNAc...) asparagine glycan. 2 helical membrane-spanning segments follow: residues 219 to 239 and 242 to 262; these read IMVGSTVTFIAGVYQVAMGFF and GFVSVYLSDALLSGFVTGASF. N-linked (GlcNAc...) asparagine glycosylation is present at Asn-357. Transmembrane regions (helical) follow at residues 378-398, 420-440, 455-475, and 524-544; these read LIPSVAVDAIAISIIGFAITV, AIGFCNIIPSFFHCFTTSAAL, LSGVVTALVLLLVLLVIAPLF, and LLSTEIGLLVGVCFSIFCVIL. Residues 568 to 719 form the STAS domain; the sequence is AYKNLQIKPG…YSVYEAMAFA (152 aa).

The protein belongs to the SLC26A/SulP transporter (TC 2.A.53) family. N-glycosylated. As to expression, ubiquitously expressed.

The protein localises to the cell membrane. It localises to the apical cell membrane. It carries out the reaction oxalate(in) + sulfate(out) = oxalate(out) + sulfate(in). The catalysed reaction is sulfate(out) + 2 chloride(in) = sulfate(in) + 2 chloride(out). It catalyses the reaction oxalate(out) + 2 chloride(in) = oxalate(in) + 2 chloride(out). The enzyme catalyses bromide(in) + chloride(out) = bromide(out) + chloride(in). It carries out the reaction nitrate(in) + chloride(out) = nitrate(out) + chloride(in). The catalysed reaction is iodide(in) + chloride(out) = iodide(out) + chloride(in). With respect to regulation, an extracellular acidic pH inhibits chloride-sulfate and chloride-oxalate exchange activity whereas an intracellular acidic pH activates chloride-sulfate exchange with no effect on chloride-oxalate exchange activity. Its function is as follows. Sulfate transporter which mediates sulfate uptake into chondrocytes in order to maintain adequate sulfation of proteoglycans which is needed for cartilage development. Mediates electroneutral anion exchange of sulfate ions for oxalate ions and of sulfate and oxalate ions for chloride ions. Mediates exchange of sulfate and oxalate ions for hydroxyl ions and of chloride ions for bromide, iodide and nitrate ions. The coupling of sulfate transport to both hydroxyl and chloride ions likely serves to ensure transport at both acidic pH when most sulfate uptake is mediated by sulfate-hydroxide exchange and alkaline pH when most sulfate uptake is mediated by sulfate-chloride exchange. Essential for chondrocyte proliferation, differentiation and cell size expansion. This Homo sapiens (Human) protein is Sulfate transporter (SLC26A2).